The following is a 470-amino-acid chain: Cytochrome P450 monooxygenase FUM2 (470 aa).

Residue C414 coordinates heme.

This sequence belongs to the cytochrome P450 family. It depends on heme as a cofactor.

The protein operates within mycotoxin biosynthesis. In terms of biological role, cytochrome P450 monooxygenase; part of the gene cluster that mediates the biosynthesis of fumonisins B1 (FB1), B2 (FB2), B3 (FB3), and B4 (FB4), which are carcinogenic mycotoxins. Within the pathway, FUM2 performs the C-10 hydroxylation present in FB2 and FB4 and which occurs early in the biosynthesis. The biosynthesis starts with the FUM1-catalyzed carbon chain assembly from one molecule of acetyl-CoA, eight molecules of malonyl-CoA, and two molecules of methionine (in S-adenosyl form). The C18 polyketide chain is released from the enzyme by a nucleophilic attack of a carbanion, which is derived from R-carbon of alanine by decarboxylation, on the carbonyl carbon of polyketide acyl chain. This step is catalyzed by the pyridoxal 5'-phosphate-dependent aminoacyl transferase FUM8. The resultant 3-keto intermediate is then stereospecifically reduced to a 3-hydroxyl product by reductase FUM13. Subsequent oxidations at C-10 by the cytochrome P450 monooxygenase FUM2, C-14 and C-15 by FUM6, FUM12 or FUM15, tricarballylic esterification of the hydroxyl groups on C-14 and C-15 by acyltransferase FUM14, and C-5 hydroxylation by 2-keto-glutarate-dependent dioxygenase FUM3 furnish the biosynthesis of fumonisins. The tricarballylic moieties are most likely derived from the citric acid cycle, and their addition to the carbon backbone may involve FUM7, FUM10, FUM11 and FUM14. In Gibberella moniliformis (strain M3125 / FGSC 7600) (Maize ear and stalk rot fungus), this protein is Cytochrome P450 monooxygenase FUM2.